The chain runs to 626 residues: DNA primase (626 aa).

A CHC2-type zinc finger spans residues 39–63; the sequence is CPFHGEKTPSFSVSPEKQIFHCFGC. A Toprim domain is found at 264–346; that stretch reads EEITLMEGFM…DVFVLQLPAG (83 aa). Residues Glu270, Asp314, and Asp316 each contribute to the Mg(2+) site.

Belongs to the DnaG primase family. Monomer. Interacts with DnaB. The cofactor is Zn(2+). It depends on Mg(2+) as a cofactor.

It catalyses the reaction ssDNA + n NTP = ssDNA/pppN(pN)n-1 hybrid + (n-1) diphosphate.. Functionally, RNA polymerase that catalyzes the synthesis of short RNA molecules used as primers for DNA polymerase during DNA replication. The polypeptide is DNA primase (Listeria innocua serovar 6a (strain ATCC BAA-680 / CLIP 11262)).